The chain runs to 330 residues: 4-hydroxythreonine-4-phosphate dehydrogenase (330 aa).

Thr133 contributes to the substrate binding site. A divalent metal cation is bound by residues His161, His206, and His261. Substrate is bound by residues Lys269, Asn278, and Arg287.

This sequence belongs to the PdxA family. In terms of assembly, homodimer. It depends on Zn(2+) as a cofactor. Mg(2+) serves as cofactor. The cofactor is Co(2+).

It localises to the cytoplasm. It carries out the reaction 4-(phosphooxy)-L-threonine + NAD(+) = 3-amino-2-oxopropyl phosphate + CO2 + NADH. The protein operates within cofactor biosynthesis; pyridoxine 5'-phosphate biosynthesis; pyridoxine 5'-phosphate from D-erythrose 4-phosphate: step 4/5. Catalyzes the NAD(P)-dependent oxidation of 4-(phosphooxy)-L-threonine (HTP) into 2-amino-3-oxo-4-(phosphooxy)butyric acid which spontaneously decarboxylates to form 3-amino-2-oxopropyl phosphate (AHAP). This Xylella fastidiosa (strain 9a5c) protein is 4-hydroxythreonine-4-phosphate dehydrogenase.